Reading from the N-terminus, the 444-residue chain is Type II NADH:quinone oxidoreductase (444 aa).

Residues 8-12, Asn38, and Ser120 contribute to the FAD site; that span reads GGGAG. Residues 186-191 and Gly285 contribute to the NAD(+) site; that span reads VGGGAT. FAD contacts are provided by Asp325 and Ala341.

Belongs to the NADH dehydrogenase family. It depends on FAD as a cofactor.

Its subcellular location is the cell inner membrane. It catalyses the reaction a quinone + NADH + H(+) = a quinol + NAD(+). The enzyme catalyses a ubiquinone + NADH + H(+) = a ubiquinol + NAD(+). Its function is as follows. Alternative, nonproton pumping NADH:quinone oxidoreductase that delivers electrons to the respiratory chain by oxidation of NADH and reduction of quinones. Utilizes NADH exclusively, and electron flow from NADH to ubiquinone does not generate an electrochemical gradient. The protein is Type II NADH:quinone oxidoreductase (ndh) of Haemophilus influenzae (strain ATCC 51907 / DSM 11121 / KW20 / Rd).